Consider the following 458-residue polypeptide: DNA repair protein RadA (458 aa).

The segment at 10–27 adopts a C4-type zinc-finger fold; the sequence is CQSCGYESPKWMGKCPGC. 98 to 105 contributes to the ATP binding site; sequence GDPGIGKS. The RadA KNRFG motif motif lies at 255 to 259; that stretch reads KNRFG. Residues 354 to 458 form a lon-protease-like region; the sequence is DAYLKVAGGV…AEALRTSLGG (105 aa).

Belongs to the RecA family. RadA subfamily. Interacts with DisA.

In terms of biological role, DNA-dependent ATPase involved in processing of recombination intermediates, plays a role in repairing DNA breaks. Stimulates the branch migration of RecA-mediated strand transfer reactions, allowing the 3' invading strand to extend heteroduplex DNA faster. Binds ssDNA in the presence of ADP but not other nucleotides, has ATPase activity that is stimulated by ssDNA and various branched DNA structures, but inhibited by SSB. Does not have RecA's homology-searching function. Functionally, plays a role in DNA repair. Might stabilize or process Holliday junction intermediates. May work with DisA following methyl methanesulfonate (MMS) but not H(2)O(2) damage; DisA is a DNA integrity scanning protein with c-di-AMP synthase activity. The polypeptide is DNA repair protein RadA (Bacillus subtilis (strain 168)).